The following is a 222-amino-acid chain: Adenylate kinase, chloroplastic (222 aa).

Residue 15 to 20 (ASGKGT) coordinates ATP. Residues 35–64 (SAGDLLRAEIAAGSENGKRAKEFMEKGQLV) are NMP. AMP is bound by residues R41, 62-64 (QLV), 91-94 (GYPR), and Q98. The interval 128-161 (GRRLDPVTGKIYHLKYSPPENEEIASRLTQRFDD) is LID. R129 lines the ATP pocket. R158 lines the AMP pocket. A195 contributes to the ATP binding site.

In terms of assembly, monomer.

It is found in the plastid. Its subcellular location is the chloroplast. The enzyme catalyses AMP + ATP = 2 ADP. Its function is as follows. Catalyzes the reversible transfer of the terminal phosphate group between ATP and AMP. Plays an important role in cellular energy homeostasis and in adenine nucleotide metabolism. The maize enzyme also works with CMP, albeit with 10% of the activity with AMP. In Zea mays (Maize), this protein is Adenylate kinase, chloroplastic (ADK1).